A 218-amino-acid chain; its full sequence is MGQKINPLGFRLGTTQDHYSLWFAQPKNFFEGLQEDQKIRNCIKNYVQKNMKISSGVEGIGHIEIQKRIDVIQVIIYLGFPKFLTEGKPKRIKELQINVQKELNCMNRKLNISITRIENPYMHPNVLAEFIAGQLKNRVSFRKAMKKAIELTEQSNTKGIQVQIAGRLDGKEIARAEWVREGRVPLQTLRAKINYCSYTVRTIYGVLGIKIWIFVDEE.

The region spanning 43 to 118 is the KH type-2 domain; the sequence is IKNYVQKNMK…KLNISITRIE (76 aa).

This sequence belongs to the universal ribosomal protein uS3 family. As to quaternary structure, part of the 30S ribosomal subunit.

It localises to the plastid. It is found in the chloroplast. The sequence is that of Small ribosomal subunit protein uS3c (rps3) from Populus trichocarpa (Western balsam poplar).